The sequence spans 1035 residues: DNA polymerase catalytic subunit (1035 aa).

Belongs to the DNA polymerase type-B family.

It localises to the host nucleus. The enzyme catalyses DNA(n) + a 2'-deoxyribonucleoside 5'-triphosphate = DNA(n+1) + diphosphate. This Macaca mulatta (Rhesus macaque) protein is DNA polymerase catalytic subunit (UL54).